The primary structure comprises 120 residues: Ribonuclease P protein component 2 (120 aa).

Belongs to the eukaryotic/archaeal RNase P protein component 2 family. As to quaternary structure, consists of a catalytic RNA component and at least 4-5 protein subunits.

Its subcellular location is the cytoplasm. It catalyses the reaction Endonucleolytic cleavage of RNA, removing 5'-extranucleotides from tRNA precursor.. In terms of biological role, part of ribonuclease P, a protein complex that generates mature tRNA molecules by cleaving their 5'-ends. The polypeptide is Ribonuclease P protein component 2 (Thermococcus kodakarensis (strain ATCC BAA-918 / JCM 12380 / KOD1) (Pyrococcus kodakaraensis (strain KOD1))).